Here is a 472-residue protein sequence, read N- to C-terminus: Acyltransferase PapA3 (472 aa).

This sequence belongs to the PapA acyltransferase family.

The enzyme catalyses a long-chain fatty acyl-CoA + alpha,alpha-trehalose = a 2-O-(long-chain fatty acyl)-alpha,alpha-trehalose + CoA. It carries out the reaction a mycolipenoyl-CoA + a 2-O-(long-chain fatty acyl)-alpha,alpha-trehalose = a 2-O-(long-chain fatty acyl)-3-O-mycolipenoyl-trehalose + CoA. The catalysed reaction is alpha,alpha-trehalose + hexadecanoyl-CoA = 2-O-hexadecanoyl-alpha,alpha-trehalose + CoA. It catalyses the reaction 2-O-hexadecanoyl-alpha,alpha-trehalose + hexadecanoyl-CoA = 2-O,3-O-dihexadecanoyl-alpha,alpha-trehalose + CoA. Involved in the biosynthesis of polyacyltrehalose (PAT), a pentaacylated, trehalose-based glycolipid that could have a role in anchoring the bacterial capsule. Catalyzes the sequential transfer of two palmitoyl groups onto a single glucose residue of trehalose generating the diacylated product 2,3-diacyltrehalose (trehalose dipalmitate). The protein is Acyltransferase PapA3 (papA3) of Mycobacterium tuberculosis (strain CDC 1551 / Oshkosh).